Consider the following 289-residue polypeptide: Right origin-binding protein (289 aa).

The HTH araC/xylS-type domain maps to 8 to 106; that stretch reads RDLLIWLEGH…AQTPALYRRS (99 aa). DNA-binding regions (H-T-H motif) lie at residues 25 to 46 and 73 to 96; these read DNVA…KDVT and ILDI…KKQF.

Functionally, transcriptional regulator. Binds to the right arm of the replication origin oriC of the chromosome. Rob binding may influence the formation of the nucleoprotein structure, required for oriC function in the initiation of replication. This is Right origin-binding protein (rob) from Escherichia coli O157:H7.